Here is a 254-residue protein sequence, read N- to C-terminus: Phosphoribosylaminoimidazole-succinocarboxamide synthase (254 aa).

This sequence belongs to the SAICAR synthetase family.

The catalysed reaction is 5-amino-1-(5-phospho-D-ribosyl)imidazole-4-carboxylate + L-aspartate + ATP = (2S)-2-[5-amino-1-(5-phospho-beta-D-ribosyl)imidazole-4-carboxamido]succinate + ADP + phosphate + 2 H(+). Its pathway is purine metabolism; IMP biosynthesis via de novo pathway; 5-amino-1-(5-phospho-D-ribosyl)imidazole-4-carboxamide from 5-amino-1-(5-phospho-D-ribosyl)imidazole-4-carboxylate: step 1/2. The polypeptide is Phosphoribosylaminoimidazole-succinocarboxamide synthase (Rhodospirillum centenum (strain ATCC 51521 / SW)).